The chain runs to 206 residues: Probable glutathione S-transferase 8 (206 aa).

The region spanning 2–79 (VHYKLSYFPI…FLARQFGING (78 aa)) is the GST N-terminal domain. Residues tyrosine 8, tryptophan 39, lysine 43, 49–51 (GQL), and 63–64 (QS) contribute to the glutathione site. The 126-residue stretch at 81 to 206 (CAWEEAQVNS…WLETRPETQF (126 aa)) folds into the GST C-terminal domain.

Belongs to the GST superfamily. Sigma family.

The enzyme catalyses RX + glutathione = an S-substituted glutathione + a halide anion + H(+). Functionally, conjugation of reduced glutathione to a wide number of exogenous and endogenous hydrophobic electrophiles. The protein is Probable glutathione S-transferase 8 (gst-8) of Caenorhabditis elegans.